A 347-amino-acid polypeptide reads, in one-letter code: Neutral protease 2 homolog MGG_10927 (347 aa).

Positions 1-19 (MKYSVGITALLATLAQGAA) are cleaved as a signal peptide. The propeptide occupies 20-176 (VMSKRDIPLD…RSYLAKRTMV (157 aa)). 2 disulfides stabilise this stretch: C180–C250 and C257–C275. H299 lines the Zn(2+) pocket. Residue E300 is part of the active site. H303 contributes to the Zn(2+) binding site.

This sequence belongs to the peptidase M35 family. Requires Zn(2+) as cofactor.

It is found in the secreted. It catalyses the reaction Preferential cleavage of bonds with hydrophobic residues in P1'. Also 3-Asn-|-Gln-4 and 8-Gly-|-Ser-9 bonds in insulin B chain.. In terms of biological role, secreted metalloproteinase that allows assimilation of proteinaceous substrates. Shows high activities on basic nuclear substrates such as histone and protamine. The protein is Neutral protease 2 homolog MGG_10927 of Pyricularia oryzae (strain 70-15 / ATCC MYA-4617 / FGSC 8958) (Rice blast fungus).